A 337-amino-acid chain; its full sequence is Inositol 2-dehydrogenase (337 aa).

Belongs to the Gfo/Idh/MocA family. As to quaternary structure, homotetramer.

The enzyme catalyses myo-inositol + NAD(+) = scyllo-inosose + NADH + H(+). In terms of biological role, involved in the oxidation of myo-inositol (MI) to 2-keto-myo-inositol (2KMI or 2-inosose). The chain is Inositol 2-dehydrogenase from Burkholderia multivorans (strain ATCC 17616 / 249).